A 234-amino-acid polypeptide reads, in one-letter code: uncharacterized protein (234 aa).

Disordered stretches follow at residues 1 to 65 and 182 to 234; these read MTSV…RRGP and ARGA…GRKT.

This is an uncharacterized protein from Homo sapiens (Human).